The sequence spans 96 residues: Large ribosomal subunit protein eL30 (96 aa).

It belongs to the eukaryotic ribosomal protein eL30 family.

The protein is Large ribosomal subunit protein eL30 of Methanosphaerula palustris (strain ATCC BAA-1556 / DSM 19958 / E1-9c).